The following is a 336-amino-acid chain: Flavonoid 4'-O-methyltransferase 3 (336 aa).

Tyr140 and Asp203 together coordinate S-adenosyl-L-methionine. His241 (proton acceptor) is an active-site residue.

This sequence belongs to the class I-like SAM-binding methyltransferase superfamily. Cation-independent O-methyltransferase family. Homodimer. In terms of tissue distribution, expressed in leaves.

It carries out the reaction scutellarein 7-methyl ether + S-adenosyl-L-methionine = ladanein + S-adenosyl-L-homocysteine + H(+). It catalyses the reaction cirsimaritin + S-adenosyl-L-methionine = salvigenin + S-adenosyl-L-homocysteine + H(+). The catalysed reaction is cirsiliol + S-adenosyl-L-methionine = eupatorin + S-adenosyl-L-homocysteine + H(+). The enzyme catalyses genkwanin + S-adenosyl-L-methionine = apigenin 4',7-dimethyl ether + S-adenosyl-L-homocysteine. It participates in flavonoid metabolism. With respect to regulation, substrate inhibition by genkwanin (GENK) at concentrations above 2.5 mM. Functionally, flavonoid 4'-O-methyltransferase involved in the biosynthesis of polymethoxylated flavonoids natural products such as nevadensin and salvigenin, aroma compounds which contribute to the flavor of sweet basil, and exhibit pharmacological activities such as anti-allergic, anti-oxidant, antibacterial, anti-proliferative, and anti-inflammatory effects. Catalyzes S-adenosylmethionine-dependent regioselective 4'-O-methylation of flavonoids; active on various hydroxylated flavonoid substrates, including scutellarein-7-methyl ether (SCU7Me) and cirsimaritin (CIRM), and, with a lower efficiency, hispidulin, ladanein (LAD), cirsioliol (CIRL) and genkwanin (GENK). The sequence is that of Flavonoid 4'-O-methyltransferase 3 from Ocimum basilicum (Sweet basil).